A 343-amino-acid chain; its full sequence is Heat-inducible transcription repressor HrcA (343 aa).

The protein belongs to the HrcA family.

In terms of biological role, negative regulator of class I heat shock genes (grpE-dnaK-dnaJ and groELS operons). Prevents heat-shock induction of these operons. The protein is Heat-inducible transcription repressor HrcA of Phytoplasma mali (strain AT).